The sequence spans 467 residues: Neutral protease 2 homolog NFIA_031120 (467 aa).

Positions 1 to 19 (MKITALASAILAVVHGALA) are cleaved as a signal peptide. Residues 20-172 (LPARAPALDI…PASIKPLDRR (153 aa)) constitute a propeptide that is removed on maturation. 2 disulfide bridges follow: Cys179/Cys251 and Cys258/Cys276. Position 300 (His300) interacts with Zn(2+). Glu301 is a catalytic residue. Zn(2+)-binding residues include His304 and Asp315. Residues 359–451 (WDGNSQPGQT…TMWDGSSEPG (93 aa)) are compositionally biased toward polar residues. The interval 359–467 (WDGNSQPGQT…HTTWGNFYQA (109 aa)) is disordered.

Belongs to the peptidase M35 family. Zn(2+) serves as cofactor.

The protein resides in the secreted. The catalysed reaction is Preferential cleavage of bonds with hydrophobic residues in P1'. Also 3-Asn-|-Gln-4 and 8-Gly-|-Ser-9 bonds in insulin B chain.. Secreted metalloproteinase that allows assimilation of proteinaceous substrates. Shows high activities on basic nuclear substrates such as histone and protamine. This Neosartorya fischeri (strain ATCC 1020 / DSM 3700 / CBS 544.65 / FGSC A1164 / JCM 1740 / NRRL 181 / WB 181) (Aspergillus fischerianus) protein is Neutral protease 2 homolog NFIA_031120.